Here is a 91-residue protein sequence, read N- to C-terminus: DNA-directed RNA polymerase subunit omega (91 aa).

It belongs to the RNA polymerase subunit omega family. The RNAP catalytic core consists of 2 alpha, 1 beta, 1 beta' and 1 omega subunit. When a sigma factor is associated with the core the holoenzyme is formed, which can initiate transcription.

It catalyses the reaction RNA(n) + a ribonucleoside 5'-triphosphate = RNA(n+1) + diphosphate. Functionally, promotes RNA polymerase assembly. Latches the N- and C-terminal regions of the beta' subunit thereby facilitating its interaction with the beta and alpha subunits. This Nocardia farcinica (strain IFM 10152) protein is DNA-directed RNA polymerase subunit omega.